Here is a 42-residue protein sequence, read N- to C-terminus: Large ribosomal subunit protein bL36 (42 aa).

Belongs to the bacterial ribosomal protein bL36 family.

In Ehrlichia ruminantium (strain Gardel), this protein is Large ribosomal subunit protein bL36.